We begin with the raw amino-acid sequence, 491 residues long: Cobyric acid synthase (491 aa).

Positions 253-429 constitute a GATase cobBQ-type domain; it reads AHRVAVVRLP…WHGSLEGDAL (177 aa). Cys334 functions as the Nucleophile in the catalytic mechanism. Residue His421 is part of the active site.

The protein belongs to the CobB/CobQ family. CobQ subfamily.

The protein operates within cofactor biosynthesis; adenosylcobalamin biosynthesis. In terms of biological role, catalyzes amidations at positions B, D, E, and G on adenosylcobyrinic A,C-diamide. NH(2) groups are provided by glutamine, and one molecule of ATP is hydrogenolyzed for each amidation. The protein is Cobyric acid synthase of Mycobacterium marinum (strain ATCC BAA-535 / M).